Consider the following 417-residue polypeptide: MEFDTIPQEAMWQMNLRSSETMESGPYPEHPGEPDCSYYIRTGLCRFGATCRFNHPPNRKLAIATARMKGEFPERLGQPECQYYLKTGTCKFGATCRFHHPKDKAGVAGRVALNILGYPLRPNESERAYYLRTGQCKFGNTCKFHHPQPSNMVLSMRGSTVYPTVQSPTTPGQQSYAAGITNWSSSSYVPSPRWQGPSSYAPLILPQGVVSVPGWSTYGGQMGSESPQQTMRNDQTYGTSHQGELENAGLQGAYSQYRSGSVPVGFYALQRDNIFPERPDQPECQFYMKTGDCKFGAVCRFHHPRERQIPAPDCVLSPIGLPLRPGEPLCVFYSRYGICKFGPSCKFDHPMGIFTYNVASPLADTPGRRLLGSSSGTAALSLSSEGLVESGTAKPRRLSLSETRPIPPGDDNIDDEG.

2 C3H1-type zinc fingers span residues 31 to 58 and 75 to 103; these read PGEP…HPPN and RLGQ…HPKD. The C3H1-type 3; degenerate zinc finger occupies 121–149; it reads RPNESERAYYLRTGQCKFGNTCKFHHPQP. 2 consecutive C3H1-type zinc fingers follow at residues 278–306 and 324–352; these read RPDQ…HPRE and RPGE…HPMG. The disordered stretch occupies residues 383–417; sequence SSEGLVESGTAKPRRLSLSETRPIPPGDDNIDDEG.

The protein localises to the nucleus. The protein is Zinc finger CCCH domain-containing protein ZFN-like of Pisum sativum (Garden pea).